The chain runs to 92 residues: Acyl carrier protein AcpXL (92 aa).

The 87-residue stretch at T2–K88 folds into the Carrier domain. S37 bears the O-(pantetheine 4'-phosphoryl)serine mark.

4'-phosphopantetheine is transferred from CoA to a specific serine of apo-ACP by AcpS. This modification is essential for activity because fatty acids are bound in thioester linkage to the sulfhydryl of the prosthetic group.

The protein localises to the cytoplasm. Its pathway is glycolipid biosynthesis; KDO(2)-lipid A biosynthesis. In terms of biological role, carrier of the growing fatty acid chain in fatty acid biosynthesis. Is involved in the transfer of long hydroxylated fatty acids to lipid A. Is acylated predominantly with 27-hydroxyoctacosanoic acid. The polypeptide is Acyl carrier protein AcpXL (acpXL) (Rhizobium etli (strain ATCC 51251 / DSM 11541 / JCM 21823 / NBRC 15573 / CFN 42)).